The chain runs to 121 residues: Chromosome transmission fidelity protein 8 homolog (121 aa).

This sequence belongs to the CTF8 family. As to quaternary structure, component of the CTF18-RFC complex, which consists of CTF18, CTF8, DSCC1, RFC2, RFC3, RFC4 and RFC5. The CTF18-RFC complex does not interact with the Rad9/Rad1/Hus1 complex. The CTF18-RFC complex interacts with POLH. CTF18/CTF8/DSCC1 associate with PCNA. CTF8 exists as a dimer with DSCC1.

It localises to the nucleus. Functionally, chromosome cohesion factor involved in sister chromatid cohesion and fidelity of chromosome transmission. Component of one of the cell nuclear antigen loader complexes, CTF18-replication factor C (CTF18-RFC), which consists of CTF18, CTF8, DSCC1, RFC2, RFC3, RFC4 and RFC5. The CTF18-RFC complex binds to single-stranded and primed DNAs and has weak ATPase activity that is stimulated the presence of primed DNA, replication protein A (RPA) and proliferating cell nuclear antigen (PCNA). The CTF18-RFC complex catalyzes the ATP-dependent loading of PCNA onto primed and gapped DNA. It also interacts with and stimulates POLH, which is suggestive of a protein network that coordinates DNA repair, recombination and chromosome cohesion reactions with replication fork progression. This Homo sapiens (Human) protein is Chromosome transmission fidelity protein 8 homolog.